Here is a 119-residue protein sequence, read N- to C-terminus: Non-specific lipid-transfer protein 12 (119 aa).

Positions Met1–Ser24 are cleaved as a signal peptide. 4 cysteine pairs are disulfide-bonded: Cys28–Cys75, Cys38–Cys52, Cys53–Cys98, and Cys73–Cys112.

It belongs to the plant LTP family.

In terms of biological role, plant non-specific lipid-transfer proteins transfer phospholipids as well as galactolipids across membranes. May play a role in wax or cutin deposition in the cell walls of expanding epidermal cells and certain secretory tissues. This chain is Non-specific lipid-transfer protein 12 (LTP12), found in Arabidopsis thaliana (Mouse-ear cress).